We begin with the raw amino-acid sequence, 194 residues long: uncharacterized protein (194 aa).

The HTH tetR-type domain occupies 6 to 66 (SGKYEKILQA…AIAENLLTHT (61 aa)). The H-T-H motif DNA-binding region spans 29–48 (SISDIVKKAGTAQGTFYLYF).

This is an uncharacterized protein from Bacillus subtilis (strain 168).